The primary structure comprises 489 residues: MVRLPYVTALTTLFSYGLLFAFGQLRDFFRRILDAGKSSNLKGYAPICLGLEDFYTRRLYLRIQDCFGRPIASAPDAWFDVVERYSNDSNKTLHRTTKTSKCLNLGSYNYLGFAAADEYCTPRVIESLKKYSASTCSVRVDGGNTKLHVELEELVARFVGKPAAILFGMGYVTNSAIIPALVGKGGLIISDSLNHNSIVNGARGSGATVRVFQHNNPAHLEEVLREQIAGGQPRTHRPWKKIIVIVEGIYSMEGELCKLPEVIAVCKKYKAYTYLDEAHSIGAVGKTGRGVCELLGVDPADVDIMMGTFTKSFGSCGGYIAASKEIIDHLKHICPAHIYATSMSPPAVQQVISAIKVILGEDGSNRGAKKLAQIRENSNFFRSELQKMGFEVLGDNDSPVMPIMLYNPAKIPAFSRECLRQHVAVVTVAFPATPLLLARARICISASHSREDLIKGLEVISKVGDLVGIKYFPVEHEKTASVEKLKKLQ.

Residues 4–24 traverse the membrane as a helical segment; the sequence is LPYVTALTTLFSYGLLFAFGQ. Lys311 carries the N6-(pyridoxal phosphate)lysine modification.

This sequence belongs to the class-II pyridoxal-phosphate-dependent aminotransferase family. In terms of assembly, heterodimer with LCB1. Component of the serine palmitoyltransferase (SPT) complex, composed of LCB1 and LCB2. Pyridoxal 5'-phosphate is required as a cofactor.

The protein resides in the endoplasmic reticulum membrane. The catalysed reaction is L-serine + hexadecanoyl-CoA + H(+) = 3-oxosphinganine + CO2 + CoA. Its pathway is lipid metabolism; sphingolipid metabolism. Serine palmitoyltransferase (SPT). The heterodimer formed with LCB1 constitutes the catalytic core. This is Long chain base biosynthesis protein 2d from Oryza sativa subsp. japonica (Rice).